Consider the following 339-residue polypeptide: Quinolinate synthase (339 aa).

Positions 63 and 81 each coordinate iminosuccinate. Residue Cys126 coordinates [4Fe-4S] cluster. Residues 152–154 (YVN) and Ser169 contribute to the iminosuccinate site. Cys211 is a [4Fe-4S] cluster binding site. Iminosuccinate is bound by residues 237 to 239 (HPE) and Thr254. Residue Cys297 coordinates [4Fe-4S] cluster.

Belongs to the quinolinate synthase family. Type 2 subfamily. The cofactor is [4Fe-4S] cluster.

It localises to the cytoplasm. It catalyses the reaction iminosuccinate + dihydroxyacetone phosphate = quinolinate + phosphate + 2 H2O + H(+). The protein operates within cofactor biosynthesis; NAD(+) biosynthesis; quinolinate from iminoaspartate: step 1/1. Functionally, catalyzes the condensation of iminoaspartate with dihydroxyacetone phosphate to form quinolinate. This is Quinolinate synthase from Xylella fastidiosa (strain Temecula1 / ATCC 700964).